A 183-amino-acid polypeptide reads, in one-letter code: COMM domain-containing protein 8 (183 aa).

The COMM domain maps to 116-183 (QLQDFDWQVK…AANKVVLQLK (68 aa)).

It belongs to the COMM domain-containing protein 8 family. As to quaternary structure, component of the commander complex consisting of the CCC subcomplex and the retriever subcomplex. Component of the CCC (COMMD/CCDC22/CCDC93) subcomplex consisting of COMMD1, COMMD2, COMMD3, COMMD4, COMMD5, COMMD6, COMMD7, COMMD8, COMMD9, COMMD10, CCDC22 and CCDC93; within the complex forms a heterodimer with COMMD4. Interacts with RELA, RELB, NFKB1/p105. Interacts with CCDC22, CCDC93, SCNN1B, CUL1, CUL2, CUL3, CUL4A, CUL4B, CUL5. In terms of tissue distribution, widely expressed with highest expression in thyroid.

The protein localises to the cytoplasm. It localises to the nucleus. In terms of biological role, scaffold protein in the commander complex that is essential for endosomal recycling of transmembrane cargos; the commander complex is composed of the CCC subcomplex and the retriever subcomplex. May modulate activity of cullin-RING E3 ubiquitin ligase (CRL) complexes. May down-regulate activation of NF-kappa-B. This chain is COMM domain-containing protein 8 (COMMD8), found in Homo sapiens (Human).